Consider the following 201-residue polypeptide: Ribonuclease HII (201 aa).

An RNase H type-2 domain is found at 12–201 (DLVAGVDEVG…VRELLDVSVQ (190 aa)). 3 residues coordinate a divalent metal cation: Asp-18, Glu-19, and Asp-110.

This sequence belongs to the RNase HII family. Requires Mn(2+) as cofactor. Mg(2+) serves as cofactor.

The protein resides in the cytoplasm. It catalyses the reaction Endonucleolytic cleavage to 5'-phosphomonoester.. Functionally, endonuclease that specifically degrades the RNA of RNA-DNA hybrids. This chain is Ribonuclease HII, found in Pseudomonas aeruginosa (strain LESB58).